The chain runs to 184 residues: MALPFSLLMALVVLSCHSSCSLGCDLPHTHSLGNTRVLMLLGQMRRISPFSCLKDRNDFGFPQEVFDGNQFRKPQAISAVHETIQQIFHLFSTDGSSAAWDESLLDKLYTGLYQQLTELEACLSQEVGVEETPLMNEDSLLAVRRYFQRIALYLQEKKYSPCAWEIVRAEIMRCFSSSTNLQQS.

An N-terminal signal peptide occupies residues 1 to 23 (MALPFSLLMALVVLSCHSSCSLG). Cystine bridges form between C24/C122 and C52/C162.

It belongs to the alpha/beta interferon family. Interacts with IFNAR2.

It localises to the secreted. Produced by macrophages, IFN-alpha have antiviral activities. This chain is Interferon alpha-2, found in Equus caballus (Horse).